The primary structure comprises 106 residues: uncharacterized protein (106 aa).

The protein localises to the mitochondrion. This is an uncharacterized protein from Claviceps purpurea (Ergot fungus).